The sequence spans 390 residues: NADH-quinone oxidoreductase subunit D (390 aa).

Belongs to the complex I 49 kDa subunit family. NDH-1 is composed of 14 different subunits. Subunits NuoB, C, D, E, F, and G constitute the peripheral sector of the complex.

It localises to the cell inner membrane. It carries out the reaction a quinone + NADH + 5 H(+)(in) = a quinol + NAD(+) + 4 H(+)(out). NDH-1 shuttles electrons from NADH, via FMN and iron-sulfur (Fe-S) centers, to quinones in the respiratory chain. The immediate electron acceptor for the enzyme in this species is believed to be ubiquinone. Couples the redox reaction to proton translocation (for every two electrons transferred, four hydrogen ions are translocated across the cytoplasmic membrane), and thus conserves the redox energy in a proton gradient. This chain is NADH-quinone oxidoreductase subunit D, found in Geotalea uraniireducens (strain Rf4) (Geobacter uraniireducens).